Consider the following 314-residue polypeptide: Cytochrome f (314 aa).

The N-terminal stretch at 1 to 30 (MATNKFFKSLLFALTIAINSFGFCIQDAVA) is a signal peptide. Tyr31, Cys51, Cys54, and His55 together coordinate heme. The helical transmembrane segment at 280–300 (IYGYLAFCFSVLITQIMLVLK) threads the bilayer.

This sequence belongs to the cytochrome f family. As to quaternary structure, the 4 large subunits of the cytochrome b6-f complex are cytochrome b6, subunit IV (17 kDa polypeptide, petD), cytochrome f and the Rieske protein, while the 4 small subunits are PetG, PetL, PetM and PetN. The complex functions as a dimer. Heme serves as cofactor.

Its subcellular location is the plastid. The protein resides in the chloroplast thylakoid membrane. Its function is as follows. Component of the cytochrome b6-f complex, which mediates electron transfer between photosystem II (PSII) and photosystem I (PSI), cyclic electron flow around PSI, and state transitions. This chain is Cytochrome f, found in Phaeodactylum tricornutum (strain CCAP 1055/1).